A 151-amino-acid chain; its full sequence is 3-dehydroquinate dehydratase 1 (151 aa).

Y23 (proton acceptor) is an active-site residue. Residues N75, H81, and D88 each contribute to the substrate site. The active-site Proton donor is the H101. Substrate is bound by residues 102 to 103 and R112; that span reads LS.

It belongs to the type-II 3-dehydroquinase family. In terms of assembly, homododecamer.

It catalyses the reaction 3-dehydroquinate = 3-dehydroshikimate + H2O. Its pathway is metabolic intermediate biosynthesis; chorismate biosynthesis; chorismate from D-erythrose 4-phosphate and phosphoenolpyruvate: step 3/7. Functionally, catalyzes a trans-dehydration via an enolate intermediate. The protein is 3-dehydroquinate dehydratase 1 (aroQ1) of Pseudomonas putida (strain ATCC 47054 / DSM 6125 / CFBP 8728 / NCIMB 11950 / KT2440).